Reading from the N-terminus, the 460-residue chain is Hemopexin (460 aa).

The N-terminal stretch at 1 to 23 (MARTVVALNILVLLGLCWSLAVA) is a signal peptide. Residues Asn-38 and Asn-64 are each glycosylated (N-linked (GlcNAc...) asparagine). Cystine bridges form between Cys-50–Cys-230, Cys-148–Cys-153, and Cys-187–Cys-199. Hemopexin repeat units follow at residues 53–93 (AWSF…WKNP), 94–138 (VTSV…FPGI), 139–183 (PYPP…SWPA), and 184–230 (VGNC…FISC). A heme-binding site is contributed by His-79. His-149 is a binding site for heme. Asn-186 is a glycosylation site (N-linked (GlcNAc...) asparagine). His-235 contributes to the heme binding site. N-linked (GlcNAc...) asparagine glycans are attached at residues Asn-240 and Asn-246. Disulfide bonds link Cys-255-Cys-458, Cys-364-Cys-406, and Cys-416-Cys-433. Hemopexin repeat units lie at residues 257–302 (ADPG…WPQG), 303–350 (PSAV…LGSP), 355–394 (LDTIDAAFSCPGSSKLYVTSGRRLWWLDLKSGAQATWAEL), and 398–448 (HEKV…SLPQ). Residue His-291 coordinates heme.

This sequence belongs to the hemopexin family. Expressed by the liver and secreted in plasma.

It localises to the secreted. In terms of biological role, binds heme and transports it to the liver for breakdown and iron recovery, after which the free hemopexin returns to the circulation. The sequence is that of Hemopexin (Hpx) from Rattus norvegicus (Rat).